We begin with the raw amino-acid sequence, 188 residues long: MSLISRLRAVVAGDDYLDGDLDDLVYDDDQPEQDQRASQADGGALATIGDGNPFDLGDNFSGSNVIGMPGISTAAAEVNLMEPRSFDEMPRAIQALRERKTVILNLTMMEPDQAQRAVDFVAGGTFAIDGHQERVGESIFLFAPSCVTVTNTSHDEASTPTVVSRDAEAEQQQEAAAAPSPAWGATAL.

Positions 152 to 162 (TSHDEASTPTV) are enriched in polar residues. The segment at 152–188 (TSHDEASTPTVVSRDAEAEQQQEAAAAPSPAWGATAL) is disordered.

The protein belongs to the SepF family. Homodimer. Interacts with FtsZ.

The protein localises to the cytoplasm. Its function is as follows. Cell division protein that is part of the divisome complex and is recruited early to the Z-ring. Probably stimulates Z-ring formation, perhaps through the cross-linking of FtsZ protofilaments. Its function overlaps with FtsA. The protein is Cell division protein SepF of Parasynechococcus marenigrum (strain WH8102).